A 466-amino-acid polypeptide reads, in one-letter code: Exodeoxyribonuclease 7 large subunit (466 aa).

Belongs to the XseA family. As to quaternary structure, heterooligomer composed of large and small subunits.

It is found in the cytoplasm. It catalyses the reaction Exonucleolytic cleavage in either 5'- to 3'- or 3'- to 5'-direction to yield nucleoside 5'-phosphates.. Its function is as follows. Bidirectionally degrades single-stranded DNA into large acid-insoluble oligonucleotides, which are then degraded further into small acid-soluble oligonucleotides. The polypeptide is Exodeoxyribonuclease 7 large subunit (Ruthia magnifica subsp. Calyptogena magnifica).